We begin with the raw amino-acid sequence, 322 residues long: FAD-dependent monooxygenase subE (322 aa).

Residues Glu35, Gly49, Arg108, and Asp313 each coordinate FAD.

It belongs to the paxM FAD-dependent monooxygenase family. FAD serves as cofactor.

The protein operates within secondary metabolite biosynthesis; terpenoid biosynthesis. In terms of biological role, FAD-dependent monooxygenase; part of the gene cluster that mediates the biosynthesis of the immunosuppressants subglutinols, meroterpenoids consisting of an alpha-pyrone (4-hydroxy-5,6-dimethyl-2-pyrone) moiety attached to a decalin core fused to a five-membered cyclic ether carrying a prenylside chain. The first step of the pathway is the synthesis of the alpha-pyrone moiety by the polyketide synthase subA via condensation of one acetyl-CoA starter unit with 3 malonyl-CoA units and 2 methylations. The alpha-pyrone is then combined with geranylgeranyl pyrophosphate (GGPP) formed by the GGPP synthase subD through the action of the prenyltransferase subC to yield a linear alpha-pyrone diterpenoid. Subsequent steps in the subglutinol biosynthetic pathway involve the decalin core formation, which is thought to be initiated by the epoxidation of the C10-C11 olefin by the FAD-dependent oxidoreductase subE. The following cyclization cascade would be catalyzed by the terpene cyclase subB. Lastly, the FAD-dependent dehydrogenase subF probably catalyzes the five-membered cyclic ether formation to complete the formation of subglutinol A. Subsequent redox reactions appear to give rise to subglutinol C and D, however, it remains unclear which enzymes are responsible for these transformations. SubD may have secondary function in the conversion of the identified subglutinols to subglutinol analog 45, which seems to be the major product of the cluster. The polypeptide is FAD-dependent monooxygenase subE (Metarhizium robertsii (strain ARSEF 23 / ATCC MYA-3075) (Metarhizium anisopliae (strain ARSEF 23))).